Reading from the N-terminus, the 409-residue chain is Phosphoglycerate kinase (409 aa).

Residues 22 to 24 (DLN), arginine 37, 60 to 63 (HLSR), arginine 122, and arginine 164 each bind substrate. ATP is bound by residues lysine 215, glutamate 338, and 365-368 (GGDS).

It belongs to the phosphoglycerate kinase family. In terms of assembly, monomer.

Its subcellular location is the cytoplasm. The enzyme catalyses (2R)-3-phosphoglycerate + ATP = (2R)-3-phospho-glyceroyl phosphate + ADP. It participates in carbohydrate degradation; glycolysis; pyruvate from D-glyceraldehyde 3-phosphate: step 2/5. In Mycoplasma pneumoniae (strain ATCC 29342 / M129 / Subtype 1) (Mycoplasmoides pneumoniae), this protein is Phosphoglycerate kinase (pgk).